A 212-amino-acid chain; its full sequence is Transcription antitermination protein NusB (212 aa).

Disordered regions lie at residues 1–34 and 169–212; these read MSDE…SKSN and EHDR…QAAG. Over residues 178 to 212 the composition is skewed to low complexity; the sequence is APAQPAAKADTATDAVADAATDAAAADDAADQAAG.

This sequence belongs to the NusB family.

Its function is as follows. Involved in transcription antitermination. Required for transcription of ribosomal RNA (rRNA) genes. Binds specifically to the boxA antiterminator sequence of the ribosomal RNA (rrn) operons. The polypeptide is Transcription antitermination protein NusB (Delftia acidovorans (strain DSM 14801 / SPH-1)).